The primary structure comprises 2137 residues: Pecanex-like protein 2 (2137 aa).

Helical transmembrane passes span 34–54 (CHLYLWLFLLLLPLALHLAFP) and 57–77 (AIIVFFYCSAVTIFFTIIKLV). 4 disordered regions span residues 92–163 (QQKP…LELS), 225–251 (NGKGKERGGKGQPPLRHRSEGGLVDKG), 402–530 (EKTS…HARV), and 545–572 (SAEIVNDTEKTMPTSKSDLEAKEGQMPN). The segment covering 96–114 (SRKEEKPNKDKEAKGEHIT) has biased composition (basic and acidic residues). Polar residues predominate over residues 116 to 125 (HRNPSNNRQI). N-linked (GlcNAc...) asparagine glycosylation is present at N136. Polar residues predominate over residues 146–156 (SRGQSITSHHS). The N-linked (GlcNAc...) asparagine glycan is linked to N449. Basic and acidic residues predominate over residues 479–490 (IKDHSSSSREPW). Polar residues predominate over residues 510 to 520 (GQTNLDPSSCK). N550, N572, N587, N598, and N613 each carry an N-linked (GlcNAc...) asparagine glycan. Polar residues predominate over residues 593–602 (ASSQLNGSAE). A disordered region spans residues 593-612 (ASSQLNGSAEQNEESGLLRD). 2 disordered regions span residues 621-655 (EILENEKPSGHSSKQGKPDLQSQDHTSTGPACTQP) and 740-763 (AREMQVSSSSTTTSESQDPSSGDP). A compositionally biased stretch (polar residues) spans 630-655 (GHSSKQGKPDLQSQDHTSTGPACTQP). The span at 746-760 (SSSSTTTSESQDPSS) shows a compositional bias: low complexity. The next 13 membrane-spanning stretches (helical) occupy residues 844-864 (LAILLIVLVSLLGFLTLSQGF), 868-888 (MWVLLFCLVMASCQYSLLKSV), 901-921 (QIITYSRPIYFCVLCGLILLL), 952-972 (YLIVFLYCFPAISLLGLFPQI), 983-1003 (IDMLFFGGSAVSGITSAVYSV), 1029-1049 (HIPALFSAFCGLLVALSYHLS), 1099-1119 (LIVCAVVAVLSFAVSASTVFL), 1124-1144 (FLSIVLFALAGAVGFVTHYVL), 1193-1213 (YILYPALILNALTIDAFLISN), 1237-1257 (SFCNPVYQFINLSFTVIFFHF), 1265-1285 (SFLLDFFMVSILFSKLGDLLH), 1302-1322 (GSSFHVFAQLFAIPHSAMLFF), and 1324-1344 (TIATSIFSTPLSPFLGSVIFI). N-linked (GlcNAc...) asparagine glycosylation is found at N1412, N1553, and N1818. Positions 1876 to 1958 (RQHSGGNIED…RPPMLSSSGP (83 aa)) are disordered. Composition is skewed to polar residues over residues 1901-1910 (SGGSQESSAE), 1920-1929 (GVSSCEGTQR), and 1937-1958 (SQSVQAHSALSQRPPMLSSSGP). An N-linked (GlcNAc...) asparagine glycan is attached at N2054.

Belongs to the pecanex family.

The protein resides in the membrane. Its function is as follows. May play a role in tumorigenesis of colorectal carcinomas with high microsatellite instability (MSI-H). The polypeptide is Pecanex-like protein 2 (Homo sapiens (Human)).